Consider the following 186-residue polypeptide: Large ribosomal subunit protein uL5c (186 aa).

Belongs to the universal ribosomal protein uL5 family. As to quaternary structure, part of the 50S ribosomal subunit; contacts the 5S rRNA.

Its subcellular location is the plastid. It localises to the chloroplast. Its function is as follows. Binds 5S rRNA, forms part of the central protuberance of the 50S subunit. In Chaetosphaeridium globosum (Charophycean green alga), this protein is Large ribosomal subunit protein uL5c (rpl5).